Consider the following 646-residue polypeptide: Macrolide export ATP-binding/permease protein MacB (646 aa).

The 239-residue stretch at 7-245 (IRLEDICKTF…EATLQPHEEI (239 aa)) folds into the ABC transporter domain. 43–50 (GASGSGKS) contributes to the ATP binding site. A run of 4 helical transmembrane segments spans residues 274 to 294 (VLTLLGIIIGVSSVVTMLAIG), 528 to 548 (VAAISLLVGGIGVMNIMLVSV), 572 to 592 (FIIEALSVSAIGGAIGVILGL), and 609 to 629 (FGPVLLAFACAFATGLIFGFL).

It belongs to the ABC transporter superfamily. Macrolide exporter (TC 3.A.1.122) family. In terms of assembly, homodimer.

It localises to the cell inner membrane. Non-canonical ABC transporter that contains transmembrane domains (TMD), which form a pore in the inner membrane, and an ATP-binding domain (NBD), which is responsible for energy generation. Confers resistance against macrolides. This is Macrolide export ATP-binding/permease protein MacB from Brucella abortus (strain 2308).